Here is a 317-residue protein sequence, read N- to C-terminus: Putative GTPase PH0274 (317 aa).

Residues 54-62 (GPPGAGKST), Asp-196, and 231-233 (VGT) each bind GTP.

It belongs to the SIMIBI class G3E GTPase family. ArgK/MeaB subfamily.

Functionally, may have GTPase activity. May also bind and hydrolyze ATP. May function as chaperone. In Pyrococcus horikoshii (strain ATCC 700860 / DSM 12428 / JCM 9974 / NBRC 100139 / OT-3), this protein is Putative GTPase PH0274.